The primary structure comprises 69 residues: DNA-directed RNA polymerase subunit epsilon (69 aa).

It belongs to the RNA polymerase subunit epsilon family. RNAP is composed of a core of 2 alpha, a beta and a beta' subunit. The core is associated with a delta subunit, and at least one of epsilon or omega. When a sigma factor is associated with the core the holoenzyme is formed, which can initiate transcription.

The catalysed reaction is RNA(n) + a ribonucleoside 5'-triphosphate = RNA(n+1) + diphosphate. Functionally, a non-essential component of RNA polymerase (RNAP). In Bacillus velezensis (strain DSM 23117 / BGSC 10A6 / LMG 26770 / FZB42) (Bacillus amyloliquefaciens subsp. plantarum), this protein is DNA-directed RNA polymerase subunit epsilon.